Consider the following 790-residue polypeptide: Valine--tRNA ligase (790 aa).

A 'HIGH' region motif is present at residues 40–50 (PTVSGKMHMGH). A 'KMSKS' region motif is present at residues 521 to 525 (KMSKS). Lys-524 contributes to the ATP binding site.

This sequence belongs to the class-I aminoacyl-tRNA synthetase family. ValS type 2 subfamily.

The protein localises to the cytoplasm. The catalysed reaction is tRNA(Val) + L-valine + ATP = L-valyl-tRNA(Val) + AMP + diphosphate. Catalyzes the attachment of valine to tRNA(Val). As ValRS can inadvertently accommodate and process structurally similar amino acids such as threonine, to avoid such errors, it has a 'posttransfer' editing activity that hydrolyzes mischarged Thr-tRNA(Val) in a tRNA-dependent manner. In Thermoplasma volcanium (strain ATCC 51530 / DSM 4299 / JCM 9571 / NBRC 15438 / GSS1), this protein is Valine--tRNA ligase.